We begin with the raw amino-acid sequence, 83 residues long: DNA-directed RNA polymerase subunit omega (83 aa).

This sequence belongs to the RNA polymerase subunit omega family. In terms of assembly, the RNAP catalytic core consists of 2 alpha, 1 beta, 1 beta' and 1 omega subunit. When a sigma factor is associated with the core the holoenzyme is formed, which can initiate transcription.

The enzyme catalyses RNA(n) + a ribonucleoside 5'-triphosphate = RNA(n+1) + diphosphate. Promotes RNA polymerase assembly. Latches the N- and C-terminal regions of the beta' subunit thereby facilitating its interaction with the beta and alpha subunits. The protein is DNA-directed RNA polymerase subunit omega of Chromohalobacter salexigens (strain ATCC BAA-138 / DSM 3043 / CIP 106854 / NCIMB 13768 / 1H11).